The chain runs to 150 residues: Large ribosomal subunit protein bL9 (150 aa).

Belongs to the bacterial ribosomal protein bL9 family.

In terms of biological role, binds to the 23S rRNA. This Limosilactobacillus fermentum (strain NBRC 3956 / LMG 18251) (Lactobacillus fermentum) protein is Large ribosomal subunit protein bL9.